We begin with the raw amino-acid sequence, 445 residues long: Phosphoglucosamine mutase (445 aa).

The Phosphoserine intermediate role is filled by Ser99. 4 residues coordinate Mg(2+): Ser99, Asp242, Asp244, and Asp246. Ser99 carries the post-translational modification Phosphoserine.

This sequence belongs to the phosphohexose mutase family. Mg(2+) serves as cofactor. In terms of processing, activated by phosphorylation.

It carries out the reaction alpha-D-glucosamine 1-phosphate = D-glucosamine 6-phosphate. Its function is as follows. Catalyzes the conversion of glucosamine-6-phosphate to glucosamine-1-phosphate. The chain is Phosphoglucosamine mutase from Campylobacter jejuni subsp. jejuni serotype O:23/36 (strain 81-176).